The following is a 155-amino-acid chain: Glutamyl-tRNA(Gln) amidotransferase subunit C, chloroplastic/mitochondrial (155 aa).

The N-terminal 52 residues, 1–52 (MATRALLAVIYASPNRCYISPSRIKIQSLTCSSSSHYYQRQSRKNHRIARSY), are a transit peptide targeting the chloroplast and mitochondrion.

This sequence belongs to the GatC family. In terms of assembly, subunit of the heterotrimeric GatCAB amidotransferase (AdT) complex, composed of A, B and C subunits.

The protein localises to the mitochondrion. It is found in the plastid. It localises to the chloroplast. It carries out the reaction L-glutamyl-tRNA(Gln) + L-glutamine + ATP + H2O = L-glutaminyl-tRNA(Gln) + L-glutamate + ADP + phosphate + H(+). Allows the formation of correctly charged Gln-tRNA(Gln) through the transamidation of misacylated Glu-tRNA(Gln) in chloroplasts and mitochondria. The reaction takes place in the presence of glutamine and ATP through an activated gamma-phospho-Glu-tRNA(Gln). In Arabidopsis thaliana (Mouse-ear cress), this protein is Glutamyl-tRNA(Gln) amidotransferase subunit C, chloroplastic/mitochondrial.